Consider the following 73-residue polypeptide: Beta-1 adrenergic receptor (73 aa).

A helical membrane pass occupies residues 1–12 (ISALVSFLPILM). The Extracellular portion of the chain corresponds to 13–38 (HWWRAENDEARRCYNDPKCCDFVTNR). An intrachain disulfide couples C25 to C31. Residues 39–64 (AYAIASSVVSFYVPLCIMAFVYLRVF) form a helical membrane-spanning segment. Residue S44 participates in cyanopindolol binding. The Cytoplasmic segment spans residues 65-73 (REAQKQVKK).

The protein belongs to the G-protein coupled receptor 1 family. Adrenergic receptor subfamily. ADRB1 sub-subfamily. As to quaternary structure, interacts (via C-terminus PDZ motif) with RAPGEF2; the interaction is direct. Interacts with GOPC, MAGI3 and DLG4. Post-translationally, homologous desensitization of the receptor is mediated by its phosphorylation by beta-adrenergic receptor kinase.

It is found in the cell membrane. Its subcellular location is the early endosome. Beta-adrenergic receptors mediate the catecholamine-induced activation of adenylate cyclase through the action of G proteins. This receptor binds epinephrine and norepinephrine with approximately equal affinity. Mediates Ras activation through G(s)-alpha- and cAMP-mediated signaling. In dorsal pons neurons, involved in the regulation of sleep/wake behaviors. The chain is Beta-1 adrenergic receptor (ADRB1) from Meriones unguiculatus (Mongolian jird).